We begin with the raw amino-acid sequence, 432 residues long: MNDFIKLAPIKKIQGTIHLPGSKSISNRALLLAAQATGTTQLTNLLDSDDVRCMLDALRNLGVSYCLSNNRKTCEINGIGGPIQSKNNNQLILSLGNAGTVMRPLIAALSVQTQNIVLTGHPRMKDRPIAHLVDALRQGGARIEYMERNGYPPIRLYGGYYGGEIFIKGSISSQFLSSVLMMTPLAYRDTLIKVDGALVSRPYIDITLSLMKIFGINIQHDNYRVFYCKGNMAYQSPGDYLVEGDASSASYFLAASAIRGGTVRVIGVGRNSKQGDIYFANILESMGAKIAWGDNYIECTRGADLNAVDLDVNNIPDAAMTLAITALFSINGPTILRNIYNWRVKESDRLAAMATELRKIGAEIVEGYDYLQITPPFKIESAYINTYDDHRIAMCFSLVALSDVSIIINNPKCTDKTFPDFFTQLSSISVLQ.

3 residues coordinate 3-phosphoshikimate: lysine 23, serine 24, and arginine 28. Residue lysine 23 coordinates phosphoenolpyruvate. Phosphoenolpyruvate contacts are provided by glycine 99 and arginine 127. Positions 172, 173, 174, 200, 317, 341, and 345 each coordinate 3-phosphoshikimate. A phosphoenolpyruvate-binding site is contributed by glutamine 174. The Proton acceptor role is filled by aspartate 317. 3 residues coordinate phosphoenolpyruvate: arginine 349, arginine 391, and lysine 416.

This sequence belongs to the EPSP synthase family. Monomer.

The protein resides in the cytoplasm. The enzyme catalyses 3-phosphoshikimate + phosphoenolpyruvate = 5-O-(1-carboxyvinyl)-3-phosphoshikimate + phosphate. It participates in metabolic intermediate biosynthesis; chorismate biosynthesis; chorismate from D-erythrose 4-phosphate and phosphoenolpyruvate: step 6/7. Catalyzes the transfer of the enolpyruvyl moiety of phosphoenolpyruvate (PEP) to the 5-hydroxyl of shikimate-3-phosphate (S3P) to produce enolpyruvyl shikimate-3-phosphate and inorganic phosphate. The protein is 3-phosphoshikimate 1-carboxyvinyltransferase of Blochmanniella pennsylvanica (strain BPEN).